Reading from the N-terminus, the 726-residue chain is Catalase-peroxidase 1 (726 aa).

The segment at 1–33 (MSTSDDIHNTTATGKCPFHQGGHDQSAGAGTTT) is disordered. Residues 105-226 (WHGAGTYRSI…LGATEMGLIY (122 aa)) constitute a cross-link (tryptophyl-tyrosyl-methioninium (Trp-Tyr) (with M-252)). Residue His-106 is the Proton acceptor of the active site. Residues 226–252 (YVNPEGPDHSGEPLSAAAAIRATFGNM) constitute a cross-link (tryptophyl-tyrosyl-methioninium (Tyr-Met) (with W-105)). His-267 serves as a coordination point for heme b.

The protein belongs to the peroxidase family. Peroxidase/catalase subfamily. Homodimer or homotetramer. The cofactor is heme b. In terms of processing, formation of the three residue Trp-Tyr-Met cross-link is important for the catalase, but not the peroxidase activity of the enzyme.

The enzyme catalyses H2O2 + AH2 = A + 2 H2O. The catalysed reaction is 2 H2O2 = O2 + 2 H2O. In terms of biological role, bifunctional enzyme with both catalase and broad-spectrum peroxidase activity. The polypeptide is Catalase-peroxidase 1 (Escherichia coli O157:H7).